The sequence spans 349 residues: UDP-N-acetylenolpyruvoylglucosamine reductase (349 aa).

The 174-residue stretch at F24–R197 folds into the FAD-binding PCMH-type domain. R173 is a catalytic residue. S249 serves as the catalytic Proton donor. Residue E345 is part of the active site.

This sequence belongs to the MurB family. The cofactor is FAD.

The protein localises to the cytoplasm. The enzyme catalyses UDP-N-acetyl-alpha-D-muramate + NADP(+) = UDP-N-acetyl-3-O-(1-carboxyvinyl)-alpha-D-glucosamine + NADPH + H(+). Its pathway is cell wall biogenesis; peptidoglycan biosynthesis. In terms of biological role, cell wall formation. The sequence is that of UDP-N-acetylenolpyruvoylglucosamine reductase from Burkholderia ambifaria (strain ATCC BAA-244 / DSM 16087 / CCUG 44356 / LMG 19182 / AMMD) (Burkholderia cepacia (strain AMMD)).